The primary structure comprises 193 residues: dCTP deaminase (193 aa).

DCTP is bound by residues 110–115 (RSSLAR), aspartate 128, 136–138 (VLE), tyrosine 171, lysine 178, and glutamine 182. The active-site Proton donor/acceptor is glutamate 138. The disordered stretch occupies residues 170-193 (PYNSRQDAKYRGQQGAVASRIDKD).

The protein belongs to the dCTP deaminase family. In terms of assembly, homotrimer.

The catalysed reaction is dCTP + H2O + H(+) = dUTP + NH4(+). Its pathway is pyrimidine metabolism; dUMP biosynthesis; dUMP from dCTP (dUTP route): step 1/2. Catalyzes the deamination of dCTP to dUTP. In Yersinia enterocolitica serotype O:8 / biotype 1B (strain NCTC 13174 / 8081), this protein is dCTP deaminase.